The chain runs to 292 residues: tRNA (guanine-N(7)-)-methyltransferase (292 aa).

The interval 1–54 (MLKRDQSEMDIEAETANMGKEEKESFVHKRQKYRQEQEEKRLAAKKGVSFEQPE) is disordered. Basic and acidic residues predominate over residues 19 to 42 (GKEEKESFVHKRQKYRQEQEEKRL). Residues Gly110, 133 to 134 (EI), 168 to 169 (NA), and Cys188 each bind S-adenosyl-L-methionine. Asp191 is an active-site residue. 266–268 (TEE) provides a ligand contact to S-adenosyl-L-methionine.

It belongs to the class I-like SAM-binding methyltransferase superfamily. TrmB family. As to quaternary structure, forms a complex with TRM82.

Its subcellular location is the nucleus. It carries out the reaction guanosine(46) in tRNA + S-adenosyl-L-methionine = N(7)-methylguanosine(46) in tRNA + S-adenosyl-L-homocysteine. Its pathway is tRNA modification; N(7)-methylguanine-tRNA biosynthesis. Catalyzes the formation of N(7)-methylguanine at position 46 (m7G46) in tRNA. The chain is tRNA (guanine-N(7)-)-methyltransferase from Yarrowia lipolytica (strain CLIB 122 / E 150) (Yeast).